Here is a 467-residue protein sequence, read N- to C-terminus: Glycine--tRNA ligase (467 aa).

Substrate is bound by residues arginine 100 and glutamate 175. ATP is bound by residues 207–209 (RNE), 217–222 (FRTREF), 291–292 (EL), and 335–338 (GADR). Residue 222–226 (FEQME) participates in substrate binding. Residue 331-335 (EPSLG) participates in substrate binding.

Belongs to the class-II aminoacyl-tRNA synthetase family. In terms of assembly, homodimer.

Its subcellular location is the cytoplasm. It carries out the reaction tRNA(Gly) + glycine + ATP = glycyl-tRNA(Gly) + AMP + diphosphate. Catalyzes the attachment of glycine to tRNA(Gly). The chain is Glycine--tRNA ligase from Clostridium perfringens (strain 13 / Type A).